Here is a 670-residue protein sequence, read N- to C-terminus: Extracellular matrix protein 2 (670 aa).

Residues 1–19 (MKLAVLFCFILLIVLQTDC) form the signal peptide. In terms of domain architecture, VWFC spans 96–153 (GYCFVKGMIMYNKAVWSPEPCTTCLCSNGRVLCDETECHPKACPYTIKPEGECCPICS). Residues 185–270 (SEEDEEIAEG…EEDAIRGDVF (86 aa)) form a disordered region. Positions 192 to 227 (AEGHKEHKKETSVPTKIHGDGERTERKLRPEKEGRS) are enriched in basic and acidic residues. Acidic residues predominate over residues 241-263 (ESKEETEREGEEEEEEEEEEEED). A Cell attachment site motif is present at residues 266–268 (RGD). In terms of domain architecture, LRRNT spans 278-315 (PGTPRGRPRLPRSCSLSYRTISCVHADFTEIPPITAPE). LRR repeat units lie at residues 339–359 (NLER…GPKA), 365–386 (KLMR…LPST), 387–407 (LEEL…SLSD), 410–430 (QLVT…DPLA), 436–456 (SLSY…GLPA), 457–478 (STEE…CFNH), 481–501 (KITM…APLA), 507–528 (NLES…LPKS), 529–549 (LLHL…VFGH), 553–573 (GLEY…DLVS), 580–601 (SLRE…IQDM), 603–624 (ALHF…QICN), and 632–655 (ALEH…AFSC). Asn349 carries an N-linked (GlcNAc...) asparagine glycan. A glycan (N-linked (GlcNAc...) asparagine) is linked at Asn420. Asn477 carries an N-linked (GlcNAc...) asparagine glycan.

Belongs to the small leucine-rich proteoglycan (SLRP) family. SLRP class I subfamily. As to quaternary structure, interacts with numerous extracellular matrix proteins. Interacts with isoform 1 of MSL1. Interacts with isoform 3 of RASSF1.

The protein resides in the secreted. It is found in the extracellular space. It localises to the extracellular matrix. In terms of biological role, promotes matrix assembly and cell adhesiveness. This is Extracellular matrix protein 2 (Ecm2) from Mus musculus (Mouse).